Consider the following 602-residue polypeptide: Zinc finger MYND domain-containing protein 11 (602 aa).

One can recognise an SAMD1-like winged helix (WH) domain in the interval 6 to 82 (KRRQADTKAI…CKGSKAGIEQ (77 aa)). The PHD-type zinc finger occupies 100-148 (DWYCFECHLPGEVLICDLCFRVYHSKCLSDEFRLRDSSSPWQCPVCRSI). The region spanning 149-255 (KKKNTNKQEM…KDTCHELDEL (107 aa)) is the Bromo domain. Cys258, Cys261, Cys277, and His281 together coordinate Zn(2+). Residues 280-331 (NHELVWAKMKGFGFWPAKVMQKEDNQVDVRFFGHHHQRAWIPSENIQDITVN) enclose the PWWP domain. Residue Lys366 forms a Glycyl lysine isopeptide (Lys-Gly) (interchain with G-Cter in SUMO2) linkage. The interval 366–459 (KNEDRGEEEA…MLHRSTQTTN (94 aa)) is disordered. Positions 394-400 (RAKKGRR) match the Nuclear localization signal motif. Residues Lys407 and Lys408 each participate in a glycyl lysine isopeptide (Lys-Gly) (interchain with G-Cter in SUMO2) cross-link. Ser421 bears the Phosphoserine mark. Over residues 435 to 459 (SVSTQTKKLSASSPRMLHRSTQTTN) the composition is skewed to polar residues. Positions 452 to 572 (HRSTQTTNDG…CYNCEEEAMY (121 aa)) are interaction with human adenovirus E1A. Zn(2+)-binding residues include Cys563, Cys566, Cys574, Cys575, Cys581, Cys585, His594, and Cys598. An MYND-type zinc finger spans residues 563–598 (CYNCEEEAMYHCCWNTSYCSIKCQQEHWHAEHKRTC).

Homooligomer; forms homooligomers via its C-terminus. Interacts with histone H3.3 trimethylated at 'Lys-36' (H3.3K36me3). Interacts (via MYND-type zinc finger) with NCOR1. Interacts (via MYND-type zinc finger) with MGA protein (via PXLXP motif). Interacts (via MYND-type zinc finger) with EZH2. Interacts with EMSY and E2F6. Interacts with PIAS1 and UBE2I. In terms of assembly, (Microbial infection) Interacts (via MYND-type zinc finger) with human adenovirus early E1A protein (via PXLXP motif); this interaction inhibits E1A mediated transactivation. As to quaternary structure, (Microbial infection) Interacts (via MYND-type zinc finger) with Epstein-Barr virus EBNA2 protein (via PXLXP motif). Interacts with Epstein-Barr virus-derived protein LMP1; leading to negatively regulate NF-kappa-B activation by Epstein-Barr virus-derived protein LMP1. In terms of processing, sumoylated following its interaction with PIAS1 and UBE2I. Post-translationally, ubiquitinated, leading to proteasomal degradation. Ubiquitous.

The protein resides in the nucleus. The protein localises to the chromosome. Its function is as follows. Chromatin reader that specifically recognizes and binds histone H3.3 trimethylated at 'Lys-36' (H3.3K36me3) and regulates RNA polymerase II elongation. Does not bind other histone H3 subtypes (H3.1 or H3.2). Colocalizes with highly expressed genes and functions as a transcription corepressor by modulating RNA polymerase II at the elongation stage. Binds non-specifically to dsDNA. Acts as a tumor-suppressor by repressing a transcriptional program essential for tumor cell growth. Functionally, (Microbial infection) Inhibits Epstein-Barr virus EBNA2-mediated transcriptional activation and host cell proliferation, through direct interaction. This chain is Zinc finger MYND domain-containing protein 11, found in Homo sapiens (Human).